The sequence spans 445 residues: tRNA-2-methylthio-N(6)-dimethylallyladenosine synthase (445 aa).

The MTTase N-terminal domain occupies 2–119 (KKLYIRTFGC…LPQLIAERRH (118 aa)). [4Fe-4S] cluster is bound by residues Cys11, Cys48, Cys82, Cys156, Cys160, and Cys163. The Radical SAM core domain maps to 142 to 378 (RVEGASAFVS…RIDQQAQAIS (237 aa)). Residues 379–442 (QAMVGRVERA…PHSLRGEIVT (64 aa)) form the TRAM domain.

Belongs to the methylthiotransferase family. MiaB subfamily. As to quaternary structure, monomer. [4Fe-4S] cluster is required as a cofactor.

The protein resides in the cytoplasm. It carries out the reaction N(6)-dimethylallyladenosine(37) in tRNA + (sulfur carrier)-SH + AH2 + 2 S-adenosyl-L-methionine = 2-methylsulfanyl-N(6)-dimethylallyladenosine(37) in tRNA + (sulfur carrier)-H + 5'-deoxyadenosine + L-methionine + A + S-adenosyl-L-homocysteine + 2 H(+). Its function is as follows. Catalyzes the methylthiolation of N6-(dimethylallyl)adenosine (i(6)A), leading to the formation of 2-methylthio-N6-(dimethylallyl)adenosine (ms(2)i(6)A) at position 37 in tRNAs that read codons beginning with uridine. This is tRNA-2-methylthio-N(6)-dimethylallyladenosine synthase from Aromatoleum aromaticum (strain DSM 19018 / LMG 30748 / EbN1) (Azoarcus sp. (strain EbN1)).